The following is a 374-amino-acid chain: Carbamoyl phosphate synthase small chain (374 aa).

Positions Met1–Asp185 are CPSase. L-glutamine is bound by residues Ser45, Gly237, and Gly239. Residues Arg189–Lys374 form the Glutamine amidotransferase type-1 domain. Cys264 serves as the catalytic Nucleophile. The L-glutamine site is built by Leu265, Gln268, Asn306, Gly308, and Phe309. Residues His347 and Glu349 contribute to the active site.

This sequence belongs to the CarA family. In terms of assembly, composed of two chains; the small (or glutamine) chain promotes the hydrolysis of glutamine to ammonia, which is used by the large (or ammonia) chain to synthesize carbamoyl phosphate. Tetramer of heterodimers (alpha,beta)4.

It catalyses the reaction hydrogencarbonate + L-glutamine + 2 ATP + H2O = carbamoyl phosphate + L-glutamate + 2 ADP + phosphate + 2 H(+). The enzyme catalyses L-glutamine + H2O = L-glutamate + NH4(+). It functions in the pathway amino-acid biosynthesis; L-arginine biosynthesis; carbamoyl phosphate from bicarbonate: step 1/1. It participates in pyrimidine metabolism; UMP biosynthesis via de novo pathway; (S)-dihydroorotate from bicarbonate: step 1/3. Its function is as follows. Small subunit of the glutamine-dependent carbamoyl phosphate synthetase (CPSase). CPSase catalyzes the formation of carbamoyl phosphate from the ammonia moiety of glutamine, carbonate, and phosphate donated by ATP, constituting the first step of 2 biosynthetic pathways, one leading to arginine and/or urea and the other to pyrimidine nucleotides. The small subunit (glutamine amidotransferase) binds and cleaves glutamine to supply the large subunit with the substrate ammonia. The polypeptide is Carbamoyl phosphate synthase small chain (Maridesulfovibrio salexigens (strain ATCC 14822 / DSM 2638 / NCIMB 8403 / VKM B-1763) (Desulfovibrio salexigens)).